The following is a 124-amino-acid chain: Sporulation initiation phosphotransferase F (124 aa).

The region spanning 5-119 (KILIVDDQYG…EIRDAVKKYL (115 aa)) is the Response regulatory domain. D10, D11, D54, and K56 together coordinate Mg(2+). The residue at position 54 (D54) is a 4-aspartylphosphate.

It depends on Mg(2+) as a cofactor. In terms of processing, phosphorylated by KinA and KinB. Dephosphorylated by RapA and RapB.

It is found in the cytoplasm. Functionally, key element in the phosphorelay regulating sporulation initiation. Phosphorylation of spo0B during sporulation initiation. The protein is Sporulation initiation phosphotransferase F (spo0F) of Bacillus subtilis (strain 168).